We begin with the raw amino-acid sequence, 445 residues long: MAPPPPAAPPCPGLTELALRVARRIQAGGAPDGNLVFSPLSVYAALALVAAGAGGDTLAELLGVLGAGSRDELAGLAGRLAGRALADRSRAGGPRVSFVSGVWYDKTRTLSPSFRDAAVQSFMAETRAADFREKPGEAVNQINAWARKATNKLIDTVIDGGLPADTDVVVANAVYFKGKWKDPFTKALTKTGKFHRLDGAAVDASFMQRGTYYDTGDYIACHDGFKVLRLPYDDERRRSPASPPPPPSTPRFSLCVFLPDALDGLWDLLDEIASTPGFLQAKLPTRHASVGELKLPKFKLTFSGDIAGVLRGLGLDATFSDGEADFSKMVEDDGGRRPLSMRSLVHKAVIEVNEEGTEAAASAINMVCGMSMTPEPRPVPVDFVADHPFAFFVIEETTGAVVFAGHVLDPSSTAGALDDDDDDDEFVVMGCLRYLLDRCMAFVGV.

An RCL region spans residues 356–380 (GTEAAASAINMVCGMSMTPEPRPVP).

Belongs to the serpin family.

Functionally, probable serine protease inhibitor. The chain is Putative serpin-Z5 from Oryza sativa subsp. japonica (Rice).